The following is a 552-amino-acid chain: uncharacterized protein (552 aa).

The 193-residue stretch at 8 to 200 (KLFADMIIQG…LLCVYEGFLK (193 aa)) folds into the DhaL domain.

This is an uncharacterized protein from Staphylococcus epidermidis (strain ATCC 12228 / FDA PCI 1200).